Here is a 145-residue protein sequence, read N- to C-terminus: Transmembrane protein 216 (145 aa).

The next 4 helical transmembrane spans lie at 22–42, 56–76, 89–109, and 122–142; these read ILFF…LFIF, LVLD…RLFF, LSIS…YLLL, and GILL…LAAF.

As to quaternary structure, part of the tectonic-like complex (also named B9 complex). Interacts with TMEM107.

It is found in the membrane. Its subcellular location is the cytoplasm. It localises to the cytoskeleton. The protein resides in the cilium basal body. In terms of biological role, part of the tectonic-like complex which is required for tissue-specific ciliogenesis and may regulate ciliary membrane composition. This chain is Transmembrane protein 216 (TMEM216), found in Homo sapiens (Human).